Reading from the N-terminus, the 177-residue chain is Peptidyl-prolyl cis-trans isomerase H (177 aa).

An N-acetylalanine modification is found at Ala-2. The 163-residue stretch at 14 to 176 (FFDVSIGGQE…LPVVISQCGE (163 aa)) folds into the PPIase cyclophilin-type domain.

Belongs to the cyclophilin-type PPIase family. PPIase H subfamily. As to quaternary structure, interacts directly with PRPF4. Part of a heteromeric complex containing PPIH, PRPF3 and PRPF4 that is stable in the absence of RNA. Component of the U4/U6-U5 tri-snRNP complex composed of the U4, U6 and U5 snRNAs and at least PRPF3, PRPF4, PRPF6, PRPF8, PRPF31, SNRNP200, TXNL4A, SNRNP40, DDX23, CD2BP2, PPIH, SNU13, EFTUD2, SART1 and USP39. Heterodimer with PRPF18.

It localises to the nucleus speckle. Its subcellular location is the cytoplasm. It catalyses the reaction [protein]-peptidylproline (omega=180) = [protein]-peptidylproline (omega=0). Its activity is regulated as follows. Inhibited by cyclosporin A. Its function is as follows. PPIase that catalyzes the cis-trans isomerization of proline imidic peptide bonds in oligopeptides and may therefore assist protein folding. Participates in pre-mRNA splicing. May play a role in the assembly of the U4/U5/U6 tri-snRNP complex, one of the building blocks of the spliceosome. May act as a chaperone. This is Peptidyl-prolyl cis-trans isomerase H (PPIH) from Homo sapiens (Human).